The primary structure comprises 384 residues: 8-amino-7-oxononanoate synthase (384 aa).

Arg21 lines the substrate pocket. 108–109 contacts pyridoxal 5'-phosphate; the sequence is GF. A substrate-binding site is contributed by His133. Residues Ser179, His207, and Thr233 each contribute to the pyridoxal 5'-phosphate site. Lys236 carries the N6-(pyridoxal phosphate)lysine modification. Thr352 serves as a coordination point for substrate.

It belongs to the class-II pyridoxal-phosphate-dependent aminotransferase family. BioF subfamily. As to quaternary structure, homodimer. Pyridoxal 5'-phosphate serves as cofactor.

It carries out the reaction 6-carboxyhexanoyl-[ACP] + L-alanine + H(+) = (8S)-8-amino-7-oxononanoate + holo-[ACP] + CO2. It participates in cofactor biosynthesis; biotin biosynthesis. Catalyzes the decarboxylative condensation of pimeloyl-[acyl-carrier protein] and L-alanine to produce 8-amino-7-oxononanoate (AON), [acyl-carrier protein], and carbon dioxide. This is 8-amino-7-oxononanoate synthase from Shigella sonnei (strain Ss046).